The chain runs to 335 residues: Replication factor C subunit 4 (335 aa).

Position 56–63 (56–63) interacts with ATP; it reads SGPPGTGK.

Belongs to the activator 1 small subunits family. In terms of assembly, heterotetramer of subunits RFC2, RFC3, RFC4 and RFC5 that can form a complex with RFC1. In terms of tissue distribution, expressed in roots, leaves, shoot apical meristem (SAM), flag leaves and panicles.

The protein localises to the nucleus. Its function is as follows. May be involved in DNA replication and thus regulate cell proliferation. The polypeptide is Replication factor C subunit 4 (RFC4) (Oryza sativa subsp. japonica (Rice)).